The sequence spans 541 residues: Chaperonin GroEL 1 (541 aa).

ATP-binding positions include 29–32, 86–90, Gly415, 479–481, and Asp495; these read TIGP, DGTTT, and NAA.

The protein belongs to the chaperonin (HSP60) family. Forms a cylinder of 14 subunits composed of two heptameric rings stacked back-to-back. Interacts with the co-chaperonin GroES.

Its subcellular location is the cytoplasm. It carries out the reaction ATP + H2O + a folded polypeptide = ADP + phosphate + an unfolded polypeptide.. In terms of biological role, together with its co-chaperonin GroES, plays an essential role in assisting protein folding. The GroEL-GroES system forms a nano-cage that allows encapsulation of the non-native substrate proteins and provides a physical environment optimized to promote and accelerate protein folding. The chain is Chaperonin GroEL 1 from Streptomyces coelicolor (strain ATCC BAA-471 / A3(2) / M145).